We begin with the raw amino-acid sequence, 243 residues long: R-spondin-2 (243 aa).

An N-terminal signal peptide occupies residues 1–21 (MQFRLFSFALIILNCMDYSHC). 11 disulfide bridges follow: Cys40/Cys46, Cys43/Cys52, Cys55/Cys74, Cys78/Cys93, Cys96/Cys104, Cys101/Cys110, Cys113/Cys124, Cys128/Cys141, Cys145/Cys187, Cys156/Cys163, and Cys196/Cys203. The stretch at 90–134 (MNRCARCRIENCDSCFSKDFCTKCKVGFYLHRGRCFDECPDGFAP) is one FU repeat. Residues 144-204 (GCEVGHWSEW…RCKMTMRHCP (61 aa)) enclose the TSP type-1 domain. Residue Asn160 is glycosylated (N-linked (GlcNAc...) asparagine). The span at 204 to 224 (PGGKRTPKAKEKRNKKKKRKL) shows a compositional bias: basic residues. The tract at residues 204-243 (PGGKRTPKAKEKRNKKKKRKLIERAQEQHSVFLATDRANQ) is disordered.

It belongs to the R-spondin family. As to quaternary structure, interacts with WNT1. Binds heparin. Interacts with LGR4, LGR5 and LGR6. Interacts with E3 ubiquitin ligases RNF43 and ZNRF3.

The protein localises to the secreted. Functionally, activator of the canonical Wnt signaling pathway by acting as a ligand for LGR4-6 receptors. Upon binding to LGR4-6 (LGR4, LGR5 or LGR6), LGR4-6 associate with phosphorylated LRP6 and frizzled receptors that are activated by extracellular Wnt receptors, triggering the canonical Wnt signaling pathway to increase expression of target genes. Also regulates the canonical Wnt/beta-catenin-dependent pathway and non-canonical Wnt signaling by acting as an inhibitor of ZNRF3, an important regulator of the Wnt signaling pathway. During embryonic development, plays a crucial role in limb specification, amplifying the Wnt signaling pathway independently of LGR4-6 receptors, possibly by acting as a direct antagonistic ligand to RNF43 and ZNRF3, hence governing the number of limbs an embryo should form. This is R-spondin-2 (RSPO2) from Homo sapiens (Human).